A 299-amino-acid chain; its full sequence is MSESNRLRIAIQKSGRLSKESMKLLRSCGVKFNINEQRLIAHSDNLPIDLLRVRDDDIPGLVMDGVVDLGIIGENVLEEEQIERERLDKPASCIKLRELDFGACRLSLAVPNEFNYEDASSLEGLRIATSYPNLLRRYMQRKGITYNDCMLKGSVEVAPRAGLADGICDLVSTGATLEANGLYETEVIYRSNACIIQSSEVQLPAKQALIEKILSRINGVVRAKESKYILLHAPTETLEQIVALLPGAENPTVLPLNDDTNRVAIHAVSTEDLFWDTMEELTKLGASSILVMPIEKMMG.

This sequence belongs to the ATP phosphoribosyltransferase family. Long subfamily. Mg(2+) serves as cofactor.

It is found in the cytoplasm. It carries out the reaction 1-(5-phospho-beta-D-ribosyl)-ATP + diphosphate = 5-phospho-alpha-D-ribose 1-diphosphate + ATP. The protein operates within amino-acid biosynthesis; L-histidine biosynthesis; L-histidine from 5-phospho-alpha-D-ribose 1-diphosphate: step 1/9. Feedback inhibited by histidine. Its function is as follows. Catalyzes the condensation of ATP and 5-phosphoribose 1-diphosphate to form N'-(5'-phosphoribosyl)-ATP (PR-ATP). Has a crucial role in the pathway because the rate of histidine biosynthesis seems to be controlled primarily by regulation of HisG enzymatic activity. The sequence is that of ATP phosphoribosyltransferase from Shewanella woodyi (strain ATCC 51908 / MS32).